We begin with the raw amino-acid sequence, 114 residues long: Replication initiation control protein YabA (114 aa).

The Zn(2+) site is built by H79, C81, C95, and C98.

The protein belongs to the YabA family. In terms of assembly, homotetramer. Interacts with both DnaA and DnaN, acting as a bridge between these two proteins. Zn(2+) is required as a cofactor.

The protein localises to the cytoplasm. Its subcellular location is the nucleoid. In terms of biological role, involved in control of chromosome replication initiation. Inhibits the cooperative binding of DnaA to the oriC region, thus negatively regulating initiation of chromosome replication. Inhibits the ability of DnaA-ATP to form a helix on DNA; does not disassemble preformed DnaA-DNA helices. Decreases the residence time of DnaA on the chromosome at its binding sites (oriC, replication forks and promoter-binding sites). Tethers DnaA to the replication machinery via the DNA polymerase beta sliding clamp subunit (dnaN). Associates with oriC and other DnaA targets on the chromosome in a DnaA-dependent manner. The protein is Replication initiation control protein YabA of Lactobacillus johnsonii (strain CNCM I-12250 / La1 / NCC 533).